The sequence spans 423 residues: Phosphoribosylamine--glycine ligase (423 aa).

Residues 107-314 (KAFMAKYNIP…LSDLVEAAID (208 aa)) enclose the ATP-grasp domain. Residue 133–194 (VNQKGAPIVI…EDFLQGEEAS (62 aa)) participates in ATP binding. Mg(2+) contacts are provided by Glu-284 and Asn-286.

This sequence belongs to the GARS family. The cofactor is Mg(2+). Mn(2+) serves as cofactor.

The enzyme catalyses 5-phospho-beta-D-ribosylamine + glycine + ATP = N(1)-(5-phospho-beta-D-ribosyl)glycinamide + ADP + phosphate + H(+). It participates in purine metabolism; IMP biosynthesis via de novo pathway; N(1)-(5-phospho-D-ribosyl)glycinamide from 5-phospho-alpha-D-ribose 1-diphosphate: step 2/2. This chain is Phosphoribosylamine--glycine ligase, found in Neisseria meningitidis serogroup A / serotype 4A (strain DSM 15465 / Z2491).